The following is a 32-amino-acid chain: HEERVCPKILMECKKDSDCLAECICLEHGYCG.

3 disulfides stabilise this stretch: Cys-6-Cys-23, Cys-13-Cys-25, and Cys-19-Cys-31.

It belongs to the protease inhibitor I7 (squash-type serine protease inhibitor) family.

It localises to the secreted. In terms of biological role, inhibits trypsin. The sequence is that of Trypsin inhibitor 3 from Cucurbita pepo (Vegetable marrow).